The following is a 281-amino-acid chain: NADPH-dependent 7-cyano-7-deazaguanine reductase (281 aa).

88-90 (IES) contributes to the substrate binding site. NADPH is bound at residue 90-91 (SK). Cys189 functions as the Thioimide intermediate in the catalytic mechanism. Residue Asp196 is the Proton donor of the active site. Residue 228–229 (HE) coordinates substrate. 257-258 (RG) provides a ligand contact to NADPH.

The protein belongs to the GTP cyclohydrolase I family. QueF type 2 subfamily. Homodimer.

The protein localises to the cytoplasm. The catalysed reaction is 7-aminomethyl-7-carbaguanine + 2 NADP(+) = 7-cyano-7-deazaguanine + 2 NADPH + 3 H(+). Its pathway is tRNA modification; tRNA-queuosine biosynthesis. Functionally, catalyzes the NADPH-dependent reduction of 7-cyano-7-deazaguanine (preQ0) to 7-aminomethyl-7-deazaguanine (preQ1). This Yersinia pseudotuberculosis serotype O:1b (strain IP 31758) protein is NADPH-dependent 7-cyano-7-deazaguanine reductase.